We begin with the raw amino-acid sequence, 188 residues long: MSRIILSLDAENADLKARVAFLEQQLFGPKSEKMTAIDPTQATLDLGDLTDIPAAANDDVAPVAEGPKQERRSPSRNIGRLPRHLPRYEELIEPESKICPCCSFELHCVGTDVSEALDIVPAVVRVKQTIRPSYACRAGESVIVQAPASARVMGESNVAPMRLAFCLAHARRKFVDVVKLTGSSEAGR.

The tract at residues 57–80 (NDDVAPVAEGPKQERRSPSRNIGR) is disordered.

The protein belongs to the transposase 25 family.

This is an uncharacterized protein from Sinorhizobium fredii (strain NBRC 101917 / NGR234).